Here is a 424-residue protein sequence, read N- to C-terminus: UDP-N-acetylglucosamine 1-carboxyvinyltransferase (424 aa).

22 to 23 (KN) is a phosphoenolpyruvate binding site. Arginine 93 is a UDP-N-acetyl-alpha-D-glucosamine binding site. Cysteine 117 acts as the Proton donor in catalysis. Cysteine 117 bears the 2-(S-cysteinyl)pyruvic acid O-phosphothioketal mark. Residues 162-165 (KVSV), aspartate 307, and isoleucine 329 each bind UDP-N-acetyl-alpha-D-glucosamine.

The protein belongs to the EPSP synthase family. MurA subfamily.

It is found in the cytoplasm. It catalyses the reaction phosphoenolpyruvate + UDP-N-acetyl-alpha-D-glucosamine = UDP-N-acetyl-3-O-(1-carboxyvinyl)-alpha-D-glucosamine + phosphate. It functions in the pathway cell wall biogenesis; peptidoglycan biosynthesis. Cell wall formation. Adds enolpyruvyl to UDP-N-acetylglucosamine. This is UDP-N-acetylglucosamine 1-carboxyvinyltransferase from Actinobacillus pleuropneumoniae serotype 7 (strain AP76).